The following is an 879-amino-acid chain: Metabotropic glutamate receptor 3 (879 aa).

Positions 1–22 (MKMLTRLQILMLALFSKGFLLS) are cleaved as a signal peptide. At 23 to 576 (LGDHNFMRRE…EDYIKWEDAW (554 aa)) the chain is on the extracellular side. C57 and C99 form a disulfide bridge. L-glutamate is bound by residues R68, S151, and 172-174 (AST). N209 is a glycosylation site (N-linked (GlcNAc...) asparagine). Residue Y222 participates in L-glutamate binding. 7 disulfides stabilise this stretch: C240–C527, C361–C373, C412–C419, C509–C528, C513–C531, C534–C546, and C549–C562. N292 is a glycosylation site (N-linked (GlcNAc...) asparagine). D301 is an L-glutamate binding site. Position 389 (K389) interacts with L-glutamate. N-linked (GlcNAc...) asparagine glycans are attached at residues N414 and N439. The helical transmembrane segment at 577-599 (AIGPVTIACLGFLCTCIVITVFI) threads the bilayer. Over 600–613 (KHNNTPLVKASGRE) the chain is Cytoplasmic. The helical transmembrane segment at 614-634 (LCYILLFGVSLSYCMTFFFIA) threads the bilayer. Over 635 to 645 (KPSPVICALRR) the chain is Extracellular. A helical membrane pass occupies residues 646 to 664 (LGLGTSFAICYSALLTKTN). Residues 665–688 (CIARIFDGVKNGAQRPKFISPSSQ) are Cytoplasmic-facing. Residues 689–709 (VFICLGLILVQIVMVSVWLIL) form a helical membrane-spanning segment. The Extracellular segment spans residues 710–734 (ETPGTRRYTLPEKRETVILKCNVKD). Residues 735 to 756 (SSMLISLTYDVVLVILCTVYAF) traverse the membrane as a helical segment. The Cytoplasmic segment spans residues 757-769 (KTRKCPENFNEAK). The helical transmembrane segment at 770–792 (FIGFTMYTTCIIWLAFLPIFYVT) threads the bilayer. Residues 793 to 802 (SSDYRVQTTT) are Extracellular-facing. Residues 803–828 (MCISVSLSGFVVLGCLFAPKVHIVLF) traverse the membrane as a helical segment. Topologically, residues 829–879 (QPQKNVVTHRLHLNRFSVSGTATTYSQSSASTYVPTVCNGREVLDSTTSSL) are cytoplasmic.

It belongs to the G-protein coupled receptor 3 family. In terms of assembly, interacts with TAMALIN. Is widely distributed in the CNS. Predominant expression is seen in the neuronal cells of the cerebral cortex, dentate gyrus, and glial cells throughout brain regions.

Its subcellular location is the cell membrane. In terms of biological role, G-protein coupled receptor for glutamate. Ligand binding causes a conformation change that triggers signaling via guanine nucleotide-binding proteins (G proteins) and modulates the activity of down-stream effectors. Signaling inhibits adenylate cyclase activity. This Rattus norvegicus (Rat) protein is Metabotropic glutamate receptor 3 (Grm3).